An 844-amino-acid chain; its full sequence is Putative ubiquitin thioesterase 232R (844 aa).

Disordered regions lie at residues Asn-136–Glu-223, Ser-261–Glu-287, Leu-326–Thr-377, and Gln-422–Val-541. The segment covering Ser-137–Ser-216 has biased composition (low complexity). Low complexity-rich tracts occupy residues Arg-332–Arg-341 and Arg-354–Arg-364. Residues Ser-429–Val-438 are compositionally biased toward pro residues. The segment covering Val-472–Lys-485 has biased composition (basic and acidic residues). A compositionally biased stretch (low complexity) spans Ser-504 to Ser-518. Positions Glu-526–Arg-535 are enriched in basic and acidic residues. Positions Tyr-590–Ile-725 constitute an OTU domain. The active site involves Asp-598. Cys-601 (nucleophile) is an active-site residue. His-718 is a catalytic residue.

It carries out the reaction Thiol-dependent hydrolysis of ester, thioester, amide, peptide and isopeptide bonds formed by the C-terminal Gly of ubiquitin (a 76-residue protein attached to proteins as an intracellular targeting signal).. Hydrolase that can remove conjugated ubiquitin from proteins and may therefore play an important regulatory role at the level of protein turnover by preventing degradation. The protein is Putative ubiquitin thioesterase 232R of Aedes vexans (Inland floodwater mosquito).